The chain runs to 1035 residues: Cell-division control histidine kinase PdhS (1035 aa).

Positions 1–613 are important for polar localization; sequence MSGSYPFIDI…HADGSEEPVD (613 aa). A disordered region spans residues 500-533; sequence QGLANTRAESETPVSETSSIEPVEPTPPVKTRSE. Residues 614-1035 form an interaction with DivK region; it reads AHLNAIAWRG…VFPPTRVLAD (422 aa). One can recognise a PAS domain in the interval 659-730; the sequence is HVEELKTILD…YLHGLSGNGV (72 aa). Residues 802 to 1031 enclose the Histidine kinase domain; it reads RISHEIRTPL…VVEIVFPPTR (230 aa). Position 805 is a phosphohistidine; by autocatalysis (H805).

Interacts with DivK.

The protein resides in the cytoplasm. The catalysed reaction is ATP + protein L-histidine = ADP + protein N-phospho-L-histidine.. Its function is as follows. Functions as a polar differentiation marker. Essential protein that, by localizing in the old pole of dividing cells, controls cell division and maturation, probably through control of DivK phosphorylation status and cellular distribution, which in turn regulates CtrA, a transcriptional regulator of the minB operon. The asymmetrical localization of this protein is probably required for cells to enter a new division cycle. This Brucella melitensis biotype 1 (strain ATCC 23456 / CCUG 17765 / NCTC 10094 / 16M) protein is Cell-division control histidine kinase PdhS (pdhS).